A 331-amino-acid chain; its full sequence is MAKTMMQDRLINPLEGAADAPDANIRPALLAEYIGQPVVREQMEVFIQAARARDEALDHTLIFGPPGLGKTTLANIIAREMGGNLRSTSGPVLERAGDLAAMLTNLEAGDVLFIDEIHRLSPVIEEILYPAMEDFQLDIMIGEGPAARSIKLELPPFTLVAATTRAGLLTSPLRDRFGIVQRLEFYNIADLTTIVSRAARLMRVPMSEDGAVEIARRARGTPRIANRLLRRVRDYAQVRGDGSINGAIAGSALDMLAVDRRGLDHLDRRYIEILHERFDGGPAGVEAVAAAMAEDRGTLEDVIEPYLIQQGYVLRTARGRVLTQMAIDQMV.

The large ATPase domain (RuvB-L) stretch occupies residues 1 to 186; sequence MAKTMMQDRL…FGIVQRLEFY (186 aa). ATP contacts are provided by residues I25, R26, G67, K70, T71, T72, 133-135, R176, Y186, and R223; that span reads EDF. T71 is a binding site for Mg(2+). Residues 187-257 are small ATPAse domain (RuvB-S); the sequence is NIADLTTIVS…IAGSALDMLA (71 aa). The segment at 260–331 is head domain (RuvB-H); sequence RRGLDHLDRR…LTQMAIDQMV (72 aa). 3 residues coordinate DNA: R296, R315, and R320.

This sequence belongs to the RuvB family. As to quaternary structure, homohexamer. Forms an RuvA(8)-RuvB(12)-Holliday junction (HJ) complex. HJ DNA is sandwiched between 2 RuvA tetramers; dsDNA enters through RuvA and exits via RuvB. An RuvB hexamer assembles on each DNA strand where it exits the tetramer. Each RuvB hexamer is contacted by two RuvA subunits (via domain III) on 2 adjacent RuvB subunits; this complex drives branch migration. In the full resolvosome a probable DNA-RuvA(4)-RuvB(12)-RuvC(2) complex forms which resolves the HJ.

The protein localises to the cytoplasm. It catalyses the reaction ATP + H2O = ADP + phosphate + H(+). Functionally, the RuvA-RuvB-RuvC complex processes Holliday junction (HJ) DNA during genetic recombination and DNA repair, while the RuvA-RuvB complex plays an important role in the rescue of blocked DNA replication forks via replication fork reversal (RFR). RuvA specifically binds to HJ cruciform DNA, conferring on it an open structure. The RuvB hexamer acts as an ATP-dependent pump, pulling dsDNA into and through the RuvAB complex. RuvB forms 2 homohexamers on either side of HJ DNA bound by 1 or 2 RuvA tetramers; 4 subunits per hexamer contact DNA at a time. Coordinated motions by a converter formed by DNA-disengaged RuvB subunits stimulates ATP hydrolysis and nucleotide exchange. Immobilization of the converter enables RuvB to convert the ATP-contained energy into a lever motion, pulling 2 nucleotides of DNA out of the RuvA tetramer per ATP hydrolyzed, thus driving DNA branch migration. The RuvB motors rotate together with the DNA substrate, which together with the progressing nucleotide cycle form the mechanistic basis for DNA recombination by continuous HJ branch migration. Branch migration allows RuvC to scan DNA until it finds its consensus sequence, where it cleaves and resolves cruciform DNA. This is Holliday junction branch migration complex subunit RuvB from Psychrobacter arcticus (strain DSM 17307 / VKM B-2377 / 273-4).